A 540-amino-acid chain; its full sequence is Chaperonin GroEL (540 aa).

Residues Thr30 to Pro33, Lys51, Asp87 to Thr91, Gly415, and Asp495 each bind ATP.

This sequence belongs to the chaperonin (HSP60) family. Forms a cylinder of 14 subunits composed of two heptameric rings stacked back-to-back. Interacts with the co-chaperonin GroES.

It localises to the cytoplasm. The catalysed reaction is ATP + H2O + a folded polypeptide = ADP + phosphate + an unfolded polypeptide.. Its function is as follows. Together with its co-chaperonin GroES, plays an essential role in assisting protein folding. The GroEL-GroES system forms a nano-cage that allows encapsulation of the non-native substrate proteins and provides a physical environment optimized to promote and accelerate protein folding. This chain is Chaperonin GroEL, found in Serratia ficaria.